Here is a 657-residue protein sequence, read N- to C-terminus: Zinc transporter ZIP4 (657 aa).

A signal peptide spans 1–22 (MMLPKSLTQGLLLAMLVGTAAM). Residues 23–335 (VQPYHLLSLL…QDQLSQAERY (313 aa)) lie on the Extracellular side of the membrane. N-linked (GlcNAc...) asparagine glycans are attached at residues N193, N220, and N268. The chain crosses the membrane as a helical span at residues 336 to 356 (LYGSLATLLICLCAVFGLLLL). Over 357-374 (TCAKCSTATHYIMQTFLS) the chain is Cytoplasmic. Residues 375-395 (LAVGALTGDALLHLIPKVLGL) traverse the membrane as a helical segment. At 396-417 (HTHSGEVHSHEEESIGGQSTWR) the chain is on the extracellular side. Residues 418-438 (LLAVLGGFYIFFLFESFFNLL) form a helical membrane-spanning segment. The Cytoplasmic segment spans residues 439-508 (LPRDQDHEKD…LRAELRMLPY (70 aa)). Positions 462–464 (LQL) match the Essential for SLC39A4 endocytosis motif. Residues 467–491 (SNLRQSKQPHESSRSDLVTEETPEL) form a disordered region. Residues 509-528 (LITLGDAVHNFADGLAVGAA) traverse the membrane as a helical segment. Zn(2+) contacts are provided by H517, N518, and D521. Topologically, residues 529-536 (FSSTWKTG) are extracellular. A helical transmembrane segment spans residues 537–563 (LATSLAVFCHELPHELGDFAALLHAGL). Positions 546, 547, and 550 each coordinate Zn(2+). Topologically, residues 564-568 (TVKRA) are cytoplasmic. Residues 569–589 (LLLNLASALTAFAGLYVALAV) traverse the membrane as a helical segment. The Extracellular segment spans residues 590-597 (GVGEEGET). A helical transmembrane segment spans residues 598–618 (WILAVATGLFLYVALCDMLPA). Over 619–627 (MMNVRDQRP) the chain is Cytoplasmic. A helical membrane pass occupies residues 628-648 (WLLFLLHNVGLLGGWTILLLL). Over 649–657 (SLYEDSITF) the chain is Extracellular.

It belongs to the ZIP transporter (TC 2.A.5) family. As to quaternary structure, homodimer; homodimerization is mediated by the transmembrane domain. Post-translationally, the extracellular N-terminal ectodomain is cleaved when cells are Zn(2+) deficient, N-terminally cleaved SLC39A4 is internalized at a faster rate. Under excess Zn(2+) conditions, SLC39A4 on the cell surface is rapidly endocytosed, ubiquitinated and degraded. In terms of processing, glycosylated. In terms of tissue distribution, expressed in duodenum, jejunum, and ileum.

The protein resides in the cell membrane. Its subcellular location is the recycling endosome membrane. It is found in the apical cell membrane. It catalyses the reaction Zn(2+)(in) = Zn(2+)(out). Functionally, selective transporter that mediates the uptake of Zn(2+). Plays an essential role for dietary zinc uptake from small intestine. The Zn(2+) uniporter activity is regulated by zinc availability. Also exhibits polyspecific binding and transport of Cu(2+), Cd(2+) and possibly Ni(2+) but at higher concentrations. In Rattus norvegicus (Rat), this protein is Zinc transporter ZIP4 (Slc39a4).